An 815-amino-acid chain; its full sequence is Cell division cycle protein 48 (815 aa).

Residues 1–30 form a disordered region; sequence MNAPSTMTDKKPEVEHLQGENPPKDTYSAE. The segment covering 8 to 18 has biased composition (basic and acidic residues); the sequence is TDKKPEVEHLQ. ATP is bound by residues 267 to 273, Asn-368, His-404, and 541 to 546; these read PGTGKTL and GTGKTL. The segment at 794 to 815 is disordered; the sequence is DSADSNTNGPSFGNDGADDLYA. Positions 795–804 are enriched in polar residues; sequence SADSNTNGPS.

The protein belongs to the AAA ATPase family. As to quaternary structure, component of the ribosome quality control complex (RQC), composed of the E3 ubiquitin ligase rkr1/ltn1, rqc1 and mtr1/rqc2, as well as cdc48 and its ubiquitin-binding cofactors. RQC forms a stable complex with 60S ribosomal subunits. Interacts with ubx2 and ubx3. Interacts with lub1. Interacts with rbd2 (via C-terminal SHP box); the interaction is required for rbd2-mediated cleavage of sre1 and sre2.

The protein localises to the cytoplasm. It localises to the nucleus. The enzyme catalyses ATP + H2O = ADP + phosphate + H(+). Its activity is regulated as follows. The first ATP-binding region has low ATPase activity. The second ATP-binding region is responsible for ATPase activity. ATP binding to the first ATP-binding region induces intrinsic activity of the second ATP-binding region. While ATP binding to the first ATP-binding region appears to prevent ATP hydrolysis by the second ATP-binding region, ADP-binding to first region promotes the coordinate and cooperative ATPase cycle of the second ATP-binding region. ATP binding to the first ATP-binding region induces a conformational change, promoting the rotation of the first ATP-binding region relative to the second ATP-binding region in the hexamer. Its function is as follows. ATP-dependent chaperone which probably uses the energy provided by ATP hydrolysis to generate mechanical force to unfold substrate proteins, disassemble protein complexes, and disaggregate protein aggregates. By recruiting and promoting the degradation of ubiquitinated proteins, plays a role in the ubiquitin fusion degradation (UFD) pathway. Has a role in the endoplasmic reticulum-associated degradation (ERAD) pathway which mediates the cytoplasmic elimination of misfolded proteins exported from the ER. Involved in spindle disassembly. Component of the ribosome quality control complex (RQC), a ribosome-associated complex that mediates ubiquitination and extraction of incompletely synthesized nascent chains for proteasomal degradation. CDC48 may provide the mechanical force that dislodges the polyubiquitinated nascent peptides from the exit channel. Required for ribophagy, a process which relocalizes ribosomal particles into the vacuole for degradation in response to starvation. Has a role in substrate recognition mediating rbd2-dependent cleavage of sterol regulatory element-binding protein sre1 and sre2. The protein is Cell division cycle protein 48 of Schizosaccharomyces pombe (strain 972 / ATCC 24843) (Fission yeast).